Reading from the N-terminus, the 226-residue chain is Protein-L-isoaspartate O-methyltransferase (226 aa).

Residue Ser66 is part of the active site.

This sequence belongs to the methyltransferase superfamily. L-isoaspartyl/D-aspartyl protein methyltransferase family.

Its subcellular location is the cytoplasm. It carries out the reaction [protein]-L-isoaspartate + S-adenosyl-L-methionine = [protein]-L-isoaspartate alpha-methyl ester + S-adenosyl-L-homocysteine. Functionally, catalyzes the methyl esterification of L-isoaspartyl residues in peptides and proteins that result from spontaneous decomposition of normal L-aspartyl and L-asparaginyl residues. It plays a role in the repair and/or degradation of damaged proteins. The chain is Protein-L-isoaspartate O-methyltransferase from Methanopyrus kandleri (strain AV19 / DSM 6324 / JCM 9639 / NBRC 100938).